Reading from the N-terminus, the 230-residue chain is tRNA (guanine-N(7)-)-methyltransferase (230 aa).

Residues Glu61, Glu86, Asp113, and Asp135 each contribute to the S-adenosyl-L-methionine site. The active site involves Asp135. Substrate contacts are provided by residues Lys139, Asp171, and 209–212; that span reads TRYE.

The protein belongs to the class I-like SAM-binding methyltransferase superfamily. TrmB family.

It catalyses the reaction guanosine(46) in tRNA + S-adenosyl-L-methionine = N(7)-methylguanosine(46) in tRNA + S-adenosyl-L-homocysteine. It functions in the pathway tRNA modification; N(7)-methylguanine-tRNA biosynthesis. Functionally, catalyzes the formation of N(7)-methylguanine at position 46 (m7G46) in tRNA. The chain is tRNA (guanine-N(7)-)-methyltransferase from Rhizobium etli (strain ATCC 51251 / DSM 11541 / JCM 21823 / NBRC 15573 / CFN 42).